A 126-amino-acid polypeptide reads, in one-letter code: Aspartate 1-decarboxylase (126 aa).

Serine 25 serves as the catalytic Schiff-base intermediate with substrate; via pyruvic acid. Serine 25 bears the Pyruvic acid (Ser) mark. Threonine 57 is a substrate binding site. Residue tyrosine 58 is the Proton donor of the active site. 73–75 is a binding site for substrate; that stretch reads GAA.

It belongs to the PanD family. In terms of assembly, heterooctamer of four alpha and four beta subunits. The cofactor is pyruvate. Is synthesized initially as an inactive proenzyme, which is activated by self-cleavage at a specific serine bond to produce a beta-subunit with a hydroxyl group at its C-terminus and an alpha-subunit with a pyruvoyl group at its N-terminus.

It is found in the cytoplasm. The catalysed reaction is L-aspartate + H(+) = beta-alanine + CO2. It functions in the pathway cofactor biosynthesis; (R)-pantothenate biosynthesis; beta-alanine from L-aspartate: step 1/1. Functionally, catalyzes the pyruvoyl-dependent decarboxylation of aspartate to produce beta-alanine. This is Aspartate 1-decarboxylase from Salmonella dublin (strain CT_02021853).